The following is a 139-amino-acid chain: Trafficking protein particle complex subunit 2-like protein (139 aa).

This sequence belongs to the TRAPP small subunits family. Sedlin subfamily. Component of the multisubunit TRAPP (transport protein particle) complex, which includes at least TRAPPC2, TRAPPC2L, TRAPPC3, TRAPPC3L, TRAPPC4, TRAPPC5, TRAPPC8, TRAPPC9, TRAPPC10, TRAPPC11 and TRAPPC12. Interacts with the heterodimer TRAPPC3-TRAPPC6A.

The protein localises to the cytoplasm. The protein resides in the perinuclear region. Its subcellular location is the endoplasmic reticulum. It is found in the golgi apparatus. Functionally, may play a role in vesicular transport from endoplasmic reticulum to Golgi. The protein is Trafficking protein particle complex subunit 2-like protein (TRAPPC2L) of Bos taurus (Bovine).